Here is a 256-residue protein sequence, read N- to C-terminus: Small ribosomal subunit protein eS1A (256 aa).

An N-acetylalanine; partial modification is found at Ala-2.

The protein belongs to the eukaryotic ribosomal protein eS1 family. In terms of assembly, component of the small ribosomal subunit. Mature ribosomes consist of a small (40S) and a large (60S) subunit. The 40S subunit contains about 33 different proteins and 1 molecule of RNA (18S). The 60S subunit contains about 49 different proteins and 3 molecules of RNA (25S, 5.8S and 5S).

The protein localises to the cytoplasm. This Clavispora lusitaniae (strain ATCC 42720) (Yeast) protein is Small ribosomal subunit protein eS1A.